The primary structure comprises 206 residues: Guanylate kinase (206 aa).

The Guanylate kinase-like domain occupies 5 to 184 (GMLIVLSGPS…AAERIKAIIR (180 aa)). 12–19 (GPSGVGKG) serves as a coordination point for ATP.

It belongs to the guanylate kinase family.

Its subcellular location is the cytoplasm. The enzyme catalyses GMP + ATP = GDP + ADP. Its function is as follows. Essential for recycling GMP and indirectly, cGMP. The sequence is that of Guanylate kinase from Lactiplantibacillus plantarum (strain ATCC BAA-793 / NCIMB 8826 / WCFS1) (Lactobacillus plantarum).